Reading from the N-terminus, the 672-residue chain is DNA-directed RNA polymerase subunit gamma (672 aa).

Zn(2+) is bound by residues cysteine 70, cysteine 72, cysteine 85, and cysteine 88. 3 residues coordinate Mg(2+): aspartate 466, aspartate 468, and aspartate 470.

It belongs to the RNA polymerase beta' chain family. RpoC1 subfamily. As to quaternary structure, in cyanobacteria the RNAP catalytic core is composed of 2 alpha, 1 beta, 1 beta', 1 gamma and 1 omega subunit. When a sigma factor is associated with the core the holoenzyme is formed, which can initiate transcription. The cofactor is Mg(2+). It depends on Zn(2+) as a cofactor.

It catalyses the reaction RNA(n) + a ribonucleoside 5'-triphosphate = RNA(n+1) + diphosphate. Functionally, DNA-dependent RNA polymerase catalyzes the transcription of DNA into RNA using the four ribonucleoside triphosphates as substrates. The sequence is that of DNA-directed RNA polymerase subunit gamma from Trichodesmium erythraeum (strain IMS101).